Reading from the N-terminus, the 927-residue chain is MDTREINGFASAARSISLPTQPNYSSKPVQEALKHLASINLRELCNEAKVERCRATRDLASCGRFVNYVLNPCGHASLCTECCQRCDVCPICRSTLPKFGDRLRLRLYYECVEAGLISRTHEEASQDSDEDEHQLAADVHRLYSLFDVAMNNNLISVVCHYITNVCMDETAVSSDPVIAFLLDEVVVKDWVKRTFRSTLAELQEIYNLETKEMQAWLDKLLRCSKQVAGICSVLEVMESAFKGSVSPQLQDVQTLRENIGKTKQHLDIMVWCIRHGFLDDVRSRYSNFTSWNALVGERKSNAVKRAWPDAVDQSSDCSVQSASLFIEDALENLEREPEYSQEIGADLEVGRLQKDKRSFLRSKIEGTSGSYPFENLRTAADMLFLHGGSDLVVAKQAIFLYYLFDRHWTTPEKYWKHTIDDFAATFGITRHSLLESFVFYLLDDHSEEALQEACRILPEICGPETYPKVAQVLLERDNPETALMVLRWSGRDGVSELVSIGEAVTALRVRVECGLLSEAFTYQRTLCLKVKENNLKNGAVKHASDDLDIWSWTEWMEILVNEFCCLSIRRNLVDRIIELPWNPDEEKYLHRCLLDSATDDPSSAVGSLLVVFYLQRYRYIQAYQVDLRLQKIEEAFVSDNQIGEEVMFRMRSQSHWRKELVDRAIDILPVIQQQQVRSGQFSEMEDASEGAKKSDLPDAPDMITSSVPFATTNSVFLQSANNARAREPVANNGSPFQPGHMIGNASHDLSHGRLFTNANRGQKSEVRSVTKNLKFGEMSTPFKDLNRARGNSQLQGKRTEESSPEVNVDRYIENNMSSPYLRRITANNPVTVKSSSNHLNGSSQKPESTFFGTRMQPDKDNFVDLDDPMDMSSSLKDNNNNVLATESRNNSGGLRWRSDETSDDEDELTSFGSMPVKGRRRRRFAAR.

The segment at 53-93 (CRATRDLASCGRFVNYVLNPCGHASLCTECCQRCDVCPICR) adopts an RING-type; degenerate zinc-finger fold. Disordered stretches follow at residues 678 to 699 (SGQFSEMEDASEGAKKSDLPDA), 782 to 806 (FKDLNRARGNSQLQGKRTEESSPEV), and 832 to 927 (VKSS…FAAR). Residues 797–806 (KRTEESSPEV) show a composition bias toward basic and acidic residues. 2 stretches are compositionally biased toward polar residues: residues 832-851 (VKSSSNHLNGSSQKPESTFF) and 878-892 (NNNNVLATESRNNSG). Residues 917–927 (KGRRRRRFAAR) show a composition bias toward basic residues.

Interacts with SCRM/ICE1, FLK and MSI4/FVE. Ubiquitously expressed with higher levels in leaf vasculature, roots and root tips.

The protein resides in the nucleus. It localises to the cytoplasm. It carries out the reaction S-ubiquitinyl-[E2 ubiquitin-conjugating enzyme]-L-cysteine + [acceptor protein]-L-lysine = [E2 ubiquitin-conjugating enzyme]-L-cysteine + N(6)-ubiquitinyl-[acceptor protein]-L-lysine.. It participates in protein modification; protein ubiquitination. Functionally, E3 ubiquitin-protein ligase that mediates ubiquitination and subsequent proteasomal degradation of the transcription factor ICE1. Acts as a negative regulator of cold signaling pathways. Probably involved in recruiting the NUP107-160 subcomplex of the nuclear pore complex to chromatin. Controls flowering time in response to ambient temperatures (16 and 23 degrees Celsius) and intermittent cold, probably via the regulation of FT and TSF levels. This is E3 ubiquitin-protein ligase HOS1 (HOS1) from Arabidopsis thaliana (Mouse-ear cress).